The primary structure comprises 341 residues: tRNA N6-adenosine threonylcarbamoyltransferase (341 aa).

Residues H111 and H115 each contribute to the Fe cation site. Substrate contacts are provided by residues 134–138, D167, G180, and N270; that span reads LVSGG. D298 contacts Fe cation.

This sequence belongs to the KAE1 / TsaD family. Fe(2+) serves as cofactor.

It is found in the cytoplasm. The catalysed reaction is L-threonylcarbamoyladenylate + adenosine(37) in tRNA = N(6)-L-threonylcarbamoyladenosine(37) in tRNA + AMP + H(+). In terms of biological role, required for the formation of a threonylcarbamoyl group on adenosine at position 37 (t(6)A37) in tRNAs that read codons beginning with adenine. Is involved in the transfer of the threonylcarbamoyl moiety of threonylcarbamoyl-AMP (TC-AMP) to the N6 group of A37, together with TsaE and TsaB. TsaD likely plays a direct catalytic role in this reaction. In Thiobacillus denitrificans (strain ATCC 25259 / T1), this protein is tRNA N6-adenosine threonylcarbamoyltransferase.